Consider the following 205-residue polypeptide: Microtubule-associated protein Jupiter (205 aa).

Serine 30 carries the post-translational modification Phosphoserine. Phosphothreonine occurs at positions 41, 98, and 102. Residues 124–135 (LISNSKGNYNGK) are compositionally biased toward polar residues. The interval 124-205 (LISNSKGNYN…PPGGYSSGLW (82 aa)) is disordered. The segment covering 136–149 (SGSVSSASSSVSSS) has biased composition (low complexity). Serine 138 and serine 149 each carry phosphoserine. The span at 181–191 (PANNGSSQVIN) shows a compositional bias: polar residues.

The protein belongs to the MAP Jupiter family.

The protein localises to the nucleus. The protein resides in the cytoplasm. It localises to the cytoskeleton. Its subcellular location is the spindle. Binds to all microtubule populations. This chain is Microtubule-associated protein Jupiter, found in Drosophila virilis (Fruit fly).